Consider the following 62-residue polypeptide: Large ribosomal subunit protein uL29 (62 aa).

This sequence belongs to the universal ribosomal protein uL29 family.

This is Large ribosomal subunit protein uL29 from Desulfosudis oleivorans (strain DSM 6200 / JCM 39069 / Hxd3) (Desulfococcus oleovorans).